Reading from the N-terminus, the 1165-residue chain is Leptin receptor (1165 aa).

The signal sequence occupies residues 1–21; the sequence is MICQKFCVVLLHWEFIYVITA. Topologically, residues 22–839 are extracellular; that stretch reads FNLSYPITPW…QDDIEKHQSD (818 aa). N-linked (GlcNAc...) asparagine glycosylation is found at Asn23, Asn41, Asn56, Asn73, Asn81, and Asn98. Disulfide bonds link Cys37/Cys90, Cys89/Cys99, Cys131/Cys142, Cys186/Cys196, and Cys188/Cys193. Asn187 carries N-linked (GlcNAc...) asparagine glycosylation. Residues Asn206, Asn276, Asn347, and Asn397 are each glycosylated (N-linked (GlcNAc...) asparagine). The region spanning 239–333 is the Fibronectin type-III 1 domain; the sequence is PPLGLHMEIT…TPRVFTTQDV (95 aa). An Ig-like domain is found at 331–429; the sequence is QDVIYFPPKI…HRYAELYVID (99 aa). 5 cysteine pairs are disulfide-bonded: Cys352-Cys412, Cys413-Cys418, Cys436-Cys447, Cys473-Cys528, and Cys488-Cys498. The leptin-binding stretch occupies residues 467–484; it reads HRSSLYCSDIPSIHPISE. N-linked (GlcNAc...) asparagine glycosylation is found at Asn516, Asn624, Asn659, Asn688, Asn697, Asn728, and Asn750. Fibronectin type-III domains are found at residues 539-634, 639-732, and 740-833; these read PPSS…TVVM, PMRG…LTFS, and IVQS…QDDI. The short motif at 622–626 is the WSXWS motif element; sequence WSNWS. A helical transmembrane segment spans residues 840–862; it reads AGLYVIVPVIISSSILLLGTLLI. Over 863–1165 the chain is Cytoplasmic; the sequence is SHQRMKKLFW…MENKMCDLTV (303 aa). Residues 871-879 carry the Box 1 motif motif; the sequence is FWEDVPNPK. Ser882 is subject to Phosphoserine. Residues 893-898 form a required for JAK2 activation region; sequence ETFEHL. The segment at 898–906 is required for STAT3 phosphorylation; that stretch reads LFIKHTASV. Phosphotyrosine; by JAK2 is present on Tyr986. Tyr1079 bears the Phosphotyrosine mark. Tyr1141 is modified (phosphotyrosine; by JAK2).

The protein belongs to the type I cytokine receptor family. Type 2 subfamily. As to quaternary structure, present as a mixture of monomers and dimers. The phosphorylated receptor binds a number of SH2 domain-containing proteins such as JAK2, STAT3, PTPN11, and SOCS3. Interaction with SOCS3 inhibits JAK/STAT signaling and MAPK cascade. In terms of processing, on ligand binding, phosphorylated on two conserved C-terminal tyrosine residues (isoform B only) by JAK2. Tyr-986 is required for complete binding and activation of PTPN11, ERK/FOS activation,for interaction with SOCS3 and SOCS3 mediated inhibition of leptin signaling. Phosphorylation on Tyr-1141 is required for STAT3 binding/activation. Phosphorylation of Tyr-1079 has a more accessory role. As to expression, isoform A is expressed in fetal liver and in hematopoietic tissues and choroid plexus. In adults highest expression in heart, liver, small intestine, prostate and ovary. Low level in lung and kidney. Isoform B is highly expressed in hypothalamus, but also in skeletal muscle. Detected in fundic and antral epithelial cells of the gastric mucosa. Isoform B and isoform A are expressed by NK cells (at protein level).

Its subcellular location is the cell membrane. It localises to the basolateral cell membrane. The protein resides in the secreted. Its function is as follows. Receptor for hormone LEP/leptin. On ligand binding, mediates LEP central and peripheral effects through the activation of different signaling pathways such as JAK2/STAT3 and MAPK cascade/FOS. In the hypothalamus, LEP acts as an appetite-regulating factor that induces a decrease in food intake and an increase in energy consumption by inducing anorexinogenic factors and suppressing orexigenic neuropeptides, also regulates bone mass and secretion of hypothalamo-pituitary-adrenal hormones. In the periphery, increases basal metabolism, influences reproductive function, regulates pancreatic beta-cell function and insulin secretion, is pro-angiogenic and affects innate and adaptive immunity. Control of energy homeostasis and melanocortin production (stimulation of POMC and full repression of AgRP transcription) is mediated by STAT3 signaling, whereas distinct signals regulate NPY and the control of fertility, growth and glucose homeostasis. Involved in the regulation of counter-regulatory response to hypoglycemia by inhibiting neurons of the parabrachial nucleus. Has a specific effect on T lymphocyte responses, differentially regulating the proliferation of naive and memory T -ells. Leptin increases Th1 and suppresses Th2 cytokine production. Functionally, may transport LEP across the blood-brain barrier. Binds LEP and mediates LEP endocytosis. Does not induce phosphorylation of and activate STAT3. Antagonizes Isoform A and isoform B-mediated LEP binding and endocytosis. The sequence is that of Leptin receptor (LEPR) from Homo sapiens (Human).